Here is a 32-residue protein sequence, read N- to C-terminus: Cytochrome b6-f complex subunit 8 (32 aa).

The chain crosses the membrane as a helical span at residues 6–26; it reads IVGITWAALMVVFTFSLSLVV.

Belongs to the PetN family. The 4 large subunits of the cytochrome b6-f complex are cytochrome b6, subunit IV (17 kDa polypeptide, PetD), cytochrome f and the Rieske protein, while the 4 small subunits are PetG, PetL, PetM and PetN. The complex functions as a dimer.

It is found in the plastid. The protein resides in the chloroplast thylakoid membrane. Its function is as follows. Component of the cytochrome b6-f complex, which mediates electron transfer between photosystem II (PSII) and photosystem I (PSI), cyclic electron flow around PSI, and state transitions. The sequence is that of Cytochrome b6-f complex subunit 8 from Pinus koraiensis (Korean pine).